We begin with the raw amino-acid sequence, 268 residues long: Protein c-ets-1-B (268 aa).

Residues 131–139 are helix HI-1; the sequence is FKDYVRDRA. The interval 150-157 is helix HI-2; that stretch reads AAALAGYT. Positions 162 to 242 form a DNA-binding region, ETS; the sequence is IQLWQFLLEL…AGKRYVYRFV (81 aa). Residues 245-249 are helix H4; it reads LQSLL. Positions 253–259 are helix H5; sequence PEELHAM.

This sequence belongs to the ETS family. As to quaternary structure, binds DNA as a homodimer; homodimerization is required for transcription activation.

The protein resides in the nucleus. It localises to the cytoplasm. Autoinhibited by a module composed of four alpha helices (HI-1, HI-2, H4, and H5) that flank the DNA-binding ETS domain, reducing the affinity for DNA. Functionally, transcription factor. Directly controls the expression of cytokine and chemokine genes in a wide variety of different cellular contexts. The sequence is that of Protein c-ets-1-B (ets1-b) from Xenopus laevis (African clawed frog).